The sequence spans 67 residues: DNA-directed RNA polymerase subunit omega (67 aa).

Belongs to the RNA polymerase subunit omega family. In terms of assembly, the RNAP catalytic core consists of 2 alpha, 1 beta, 1 beta' and 1 omega subunit. When a sigma factor is associated with the core the holoenzyme is formed, which can initiate transcription.

The catalysed reaction is RNA(n) + a ribonucleoside 5'-triphosphate = RNA(n+1) + diphosphate. Functionally, promotes RNA polymerase assembly. Latches the N- and C-terminal regions of the beta' subunit thereby facilitating its interaction with the beta and alpha subunits. This is DNA-directed RNA polymerase subunit omega from Paraburkholderia phymatum (strain DSM 17167 / CIP 108236 / LMG 21445 / STM815) (Burkholderia phymatum).